The following is a 192-amino-acid chain: Adenylate kinase (192 aa).

ATP is bound at residue Gly10–Thr18.

Belongs to the archaeal adenylate kinase family. Monomer.

It localises to the cytoplasm. The catalysed reaction is AMP + ATP = 2 ADP. The polypeptide is Adenylate kinase (Methanococcus maripaludis (strain DSM 14266 / JCM 13030 / NBRC 101832 / S2 / LL)).